A 470-amino-acid chain; its full sequence is MSEPHFKVIIVGGSITGLTLAHSLHKIGVDFTILEKRATVTPQEGASVGILPNGARVLDQLGLYGLVEEATAPLGATHIHFPDGFHFCSLYPKSMLDNFGYPVAFLERRRLLEVLYNALPDKSKVLVNKTVSDIEQCEDGKSAGVKVRTADGDVYEGDIVVGADGVHSRTRSELWRMSSSAGQSEDVRMEKARMSAEYSCVFGISRGPSGLKAGEQIMRMYDGRTLVVIPSKDDVVFWFLSRKLGKKYKYSEAPRFTLEDAAAECAELADAPLGNDVRFGDVWKIRQTFNMVVLEENLLRTWSFGRVLCIGDSIHKMTVNLGQGANCAIEDVAILTNLLSQCLGSKREAKPSGQELDALLRRFNDVHLSRVSHIYDTSWLIARVHARDGFVRKIIGRYVMPYFGHKFESRPFNMIANAAALEFLPLPRSSFPGWEKYKSKEDKSGSWAVVSRSVLLLVGLAILSTWWRRA.

Positions 1–24 (MSEPHFKVIIVGGSITGLTLAHSL) are cleaved as a signal peptide. FAD-binding residues include E35, G49, and R108. N128 is a glycosylation site (N-linked (GlcNAc...) asparagine). R193 is an active-site residue. Residues D312 and A325 each contribute to the FAD site. A helical transmembrane segment spans residues 447 to 463 (WAVVSRSVLLLVGLAIL).

It belongs to the paxM FAD-dependent monooxygenase family. FAD serves as cofactor.

It is found in the membrane. It functions in the pathway secondary metabolite biosynthesis; terpenoid biosynthesis. Functionally, FAD-dependent monooxygenase; part of the gene cluster that mediates the biosynthesis of the diterpenoid pyrones higginsianins A and B. The first step of the pathway is the synthesis of the alpha-pyrone moiety by the polyketide synthase dpchA via condensation of one acetyl-CoA starter unit with 3 malonyl-CoA units and 2 methylations. The alpha-pyrone is then combined with geranylgeranyl pyrophosphate (GGPP) formed by the GGPP synthase dpchD through the action of the prenyltransferase dpchC to yield a linear alpha-pyrone diterpenoid. Subsequent steps in the diterpenoid pyrone biosynthetic pathway involve the decalin core formation, which is initiated by the epoxidation of the C10-C11 olefin by the FAD-dependent oxidoreductase dpchE, and is followed by a cyclization cascade catalyzed by the terpene cyclase dpchB. The short chain dehydrogenase/reductase dpchG then oxidizes the 8S hydroxy group to a ketone and the short chain dehydrogenase/reductase dpchH reduces the ketone to the 8R hydroxy group to yield higginsianin B. Finally, the FAD-dependent oxidoreductase dpchF converts higginsianin B into higginsianin A. This Colletotrichum higginsianum (strain IMI 349063) (Crucifer anthracnose fungus) protein is FAD-dependent monooxygenase dpchE.